The chain runs to 139 residues: Transcription factor E (139 aa).

One can recognise an HTH TFE/IIEalpha-type domain in the interval 7–91 (IINKKQDEVS…DYEKILDTLL (85 aa)).

The protein belongs to the TFE family. In terms of assembly, monomer. Interaction with RNA polymerase subunits RpoF and RpoE is necessary for Tfe stimulatory transcription activity. Able to interact with Tbp and RNA polymerase in the absence of DNA promoter. Interacts both with the preinitiation and elongation complexes.

Its function is as follows. Transcription factor that plays a role in the activation of archaeal genes transcribed by RNA polymerase. Facilitates transcription initiation by enhancing TATA-box recognition by TATA-box-binding protein (Tbp), and transcription factor B (Tfb) and RNA polymerase recruitment. Not absolutely required for transcription in vitro, but particularly important in cases where Tbp or Tfb function is not optimal. It dynamically alters the nucleic acid-binding properties of RNA polymerases by stabilizing the initiation complex and destabilizing elongation complexes. Seems to translocate with the RNA polymerase following initiation and acts by binding to the non template strand of the transcription bubble in elongation complexes. This is Transcription factor E from Nanoarchaeum equitans (strain Kin4-M).